The primary structure comprises 378 residues: tRNA (guanine(37)-N(1))-methyltransferase (378 aa).

S-adenosyl-L-methionine is bound by residues His196, 234–235 (DL), 262–263 (DA), and Asn282.

It belongs to the class I-like SAM-binding methyltransferase superfamily. TRM5/TYW2 family. Monomer.

The protein localises to the mitochondrion matrix. It is found in the nucleus. Its subcellular location is the cytoplasm. It catalyses the reaction guanosine(37) in tRNA + S-adenosyl-L-methionine = N(1)-methylguanosine(37) in tRNA + S-adenosyl-L-homocysteine + H(+). Functionally, specifically methylates the N1 position of guanosine-37 in various cytoplasmic and mitochondrial tRNAs. Methylation is not dependent on the nature of the nucleoside 5' of the target nucleoside. This is the first step in the biosynthesis of wybutosine (yW), a modified base adjacent to the anticodon of tRNAs and required for accurate decoding. This Trichomonas vaginalis (strain ATCC PRA-98 / G3) protein is tRNA (guanine(37)-N(1))-methyltransferase.